The following is a 152-amino-acid chain: MIQMDNSALQKLTETISLKYFKMPFKHKAYFNKRLRTTGGRYLLSSHNIEVNEKQFAKFGESAIIDIIKHELCHYHLHLQKKGYQHKDKDFKRLCQQTGAPRFCSAIEKYEDRVNYIYQCQKCASRFPRIRKVDTNKMVCGKCNGKLKELNN.

A SprT-like domain is found at 9–149 (LQKLTETISL…CGKCNGKLKE (141 aa)). Zn(2+) is bound at residue His70. Glu71 is a catalytic residue. Residue His74 participates in Zn(2+) binding.

It belongs to the SprT family. Zn(2+) is required as a cofactor.

The protein resides in the cytoplasm. In Staphylococcus saprophyticus subsp. saprophyticus (strain ATCC 15305 / DSM 20229 / NCIMB 8711 / NCTC 7292 / S-41), this protein is Protein SprT-like.